Consider the following 353-residue polypeptide: MKGNGSTLLNASQQAPGVGEGGGPRPSWLASTLAFILIFTIVVDILGNLLVILSVYRNKKLRNAGNIFVVSLAIADLVVAIYPYPLVLTSIFNNGWNLGYLHCQISAFLMGLSVIGSIFNITGIAINRYCYICHSLKYDRLYSNKNSLCYVFLIWVLTLVAIMPNLQTGTLQYDPRIYSCTFTQSVSSAYTIAVVVFHFIVPMIIVIFCYLRIWILVLQVRRRVKPDSKPRLKPQDFRNFVTMFVVFVLFAICWAPLNFIGLIVASDPATMAPRIPEWLFVASYYMAYFNSCLNAIIYGLLNQNFRQEYKRILVSLFTAKMCFVDSSNDPADKIKCKPAPLIANNNLIKVDSV.

Residues Met1–Ala15 are compositionally biased toward polar residues. Residues Met1 to Gly23 form a disordered region. Over Met1–Thr32 the chain is Extracellular. N-linked (GlcNAc...) asparagine glycans are attached at residues Asn4 and Asn10. A helical membrane pass occupies residues Leu33 to Leu53. The Cytoplasmic portion of the chain corresponds to Ser54–Asn66. The chain crosses the membrane as a helical span at residues Ile67–Val87. Over Leu88–Ile105 the chain is Extracellular. A disulfide bond links Cys103 and Cys180. Residues Ser106–Ile126 form a helical membrane-spanning segment. The Cytoplasmic segment spans residues Asn127–Ser147. Residues Leu148–Thr168 traverse the membrane as a helical segment. Residues Gly169 to Tyr190 lie on the Extracellular side of the membrane. The helical transmembrane segment at Thr191–Leu211 threads the bilayer. Topologically, residues Arg212–Met243 are cytoplasmic. A helical transmembrane segment spans residues Phe244–Val264. Topologically, residues Ala265–Glu277 are extracellular. The helical transmembrane segment at Trp278–Tyr298 threads the bilayer. Residues Gly299 to Val353 lie on the Cytoplasmic side of the membrane.

It belongs to the G-protein coupled receptor 1 family. As to expression, at least in the brain, more precisely in the pars tuberalis and the suprachiasmatic nucleus.

The protein localises to the cell membrane. High affinity receptor for melatonin. Likely to mediate the reproductive and circadian actions of melatonin. The activity of this receptor is mediated by pertussis toxin sensitive G proteins that inhibit adenylate cyclase activity. Possibly involved in sleep induction, by melatonin activation of the potassium channel KCNMA1/BK and the dissociation of G-beta and G-gamma subunits, thereby decreasing synaptic transmission. This Phodopus sungorus (Striped hairy-footed hamster) protein is Melatonin receptor type 1A (MTNR1A).